We begin with the raw amino-acid sequence, 315 residues long: Replication factor C small subunit (315 aa).

43–50 (GSPGVGKT) is a binding site for ATP.

It belongs to the activator 1 small subunits family. RfcS subfamily. As to quaternary structure, heteromultimer composed of small subunits (RfcS) and large subunits (RfcL).

Its function is as follows. Part of the RFC clamp loader complex which loads the PCNA sliding clamp onto DNA. The polypeptide is Replication factor C small subunit (Methanococcus maripaludis (strain C5 / ATCC BAA-1333)).